The following is a 435-amino-acid chain: Glutamate-1-semialdehyde 2,1-aminomutase (435 aa).

K266 is subject to N6-(pyridoxal phosphate)lysine.

It belongs to the class-III pyridoxal-phosphate-dependent aminotransferase family. HemL subfamily. In terms of assembly, homodimer. Pyridoxal 5'-phosphate serves as cofactor.

The protein localises to the cytoplasm. It catalyses the reaction (S)-4-amino-5-oxopentanoate = 5-aminolevulinate. The protein operates within porphyrin-containing compound metabolism; protoporphyrin-IX biosynthesis; 5-aminolevulinate from L-glutamyl-tRNA(Glu): step 2/2. This is Glutamate-1-semialdehyde 2,1-aminomutase from Coxiella burnetii (strain CbuG_Q212) (Coxiella burnetii (strain Q212)).